A 425-amino-acid chain; its full sequence is Phosphomethylpyrimidine synthase (425 aa).

Residues Met-94, Tyr-123, His-162, 184 to 186 (SRG), 225 to 228 (NGMR), and Glu-264 each bind substrate. Position 268 (His-268) interacts with Zn(2+). Residue Tyr-291 participates in substrate binding. His-332 is a binding site for Zn(2+). [4Fe-4S] cluster is bound by residues Cys-407, Cys-410, and Cys-414.

The protein belongs to the ThiC family. Requires [4Fe-4S] cluster as cofactor.

The enzyme catalyses 5-amino-1-(5-phospho-beta-D-ribosyl)imidazole + S-adenosyl-L-methionine = 4-amino-2-methyl-5-(phosphooxymethyl)pyrimidine + CO + 5'-deoxyadenosine + formate + L-methionine + 3 H(+). The protein operates within cofactor biosynthesis; thiamine diphosphate biosynthesis. Functionally, catalyzes the synthesis of the hydroxymethylpyrimidine phosphate (HMP-P) moiety of thiamine from aminoimidazole ribotide (AIR) in a radical S-adenosyl-L-methionine (SAM)-dependent reaction. The polypeptide is Phosphomethylpyrimidine synthase (Methanocorpusculum labreanum (strain ATCC 43576 / DSM 4855 / Z)).